The sequence spans 148 residues: General odorant-binding protein 69a (148 aa).

The first 23 residues, 1–23, serve as a signal peptide directing secretion; sequence MVARHFSFFLALLILYDLIPSNQ. Cystine bridges form between Cys42/Cys74, Cys70/Cys121, and Cys112/Cys130.

This sequence belongs to the PBP/GOBP family. Expressed in the antenna, mostly on the anterior surface of the third antennal segment. Expressed in auxiliary cells and the third antennal segment and exported to the sensillar lymph (at protein level).

The protein localises to the secreted. Functionally, odorant-binding protein required for olfactory behavior and activity of pheromone-sensitive neurons in response to the male-specific pheromone cis-vaccenyl acetate (cVA). Modulates social responsivity differently in males and females, regulating male aggression and female receptivity respectively. The sequence is that of General odorant-binding protein 69a (Obp69a) from Drosophila melanogaster (Fruit fly).